Reading from the N-terminus, the 172-residue chain is 6,7-dimethyl-8-ribityllumazine synthase (172 aa).

Residues Phe-22 and 56 to 58 (AFE) each bind 5-amino-6-(D-ribitylamino)uracil. (2S)-2-hydroxy-3-oxobutyl phosphate is bound at residue 78 to 79 (LG). 80–82 (AII) serves as a coordination point for 5-amino-6-(D-ribitylamino)uracil. The active-site Proton donor is His-88. A 5-amino-6-(D-ribitylamino)uracil-binding site is contributed by Phe-113. Position 127 (Arg-127) interacts with (2S)-2-hydroxy-3-oxobutyl phosphate.

This sequence belongs to the DMRL synthase family.

It catalyses the reaction (2S)-2-hydroxy-3-oxobutyl phosphate + 5-amino-6-(D-ribitylamino)uracil = 6,7-dimethyl-8-(1-D-ribityl)lumazine + phosphate + 2 H2O + H(+). Its pathway is cofactor biosynthesis; riboflavin biosynthesis; riboflavin from 2-hydroxy-3-oxobutyl phosphate and 5-amino-6-(D-ribitylamino)uracil: step 1/2. In terms of biological role, catalyzes the formation of 6,7-dimethyl-8-ribityllumazine by condensation of 5-amino-6-(D-ribitylamino)uracil with 3,4-dihydroxy-2-butanone 4-phosphate. This is the penultimate step in the biosynthesis of riboflavin. The polypeptide is 6,7-dimethyl-8-ribityllumazine synthase (Protochlamydia amoebophila (strain UWE25)).